The chain runs to 708 residues: Leukotoxin translocation ATP-binding protein LktB (708 aa).

A Peptidase C39 domain is found at 1 to 126 (MEANHQRNDL…ACYQGQLILV (126 aa)). One can recognise an ABC transmembrane type-1 domain in the interval 155-437 (FLETLIVSIF…LAQLWQDFQQ (283 aa)). 5 helical membrane-spanning segments follow: residues 159 to 179 (LIVSIFLQIFALITPLFFQVV), 192 to 212 (LNIITVALAIVIIFEIVLSGL), 270 to 290 (ALTSVLDLLFSFIFFAVMWYY), 296 to 316 (LVILGSLPFYILWSIFISPIL), and 389 to 409 (VMVINLWLGAHLVISGDLSIG). Residues 469 to 704 (ISFKNIRFRY…SNGLYSYLHQ (236 aa)) form the ABC transporter domain. 503 to 510 (GRSGSGKS) provides a ligand contact to ATP.

Belongs to the ABC transporter superfamily. Protein-1 exporter (TC 3.A.1.109) family. In terms of assembly, homodimer.

It is found in the cell inner membrane. The catalysed reaction is ATP + H2O + proteinSide 1 = ADP + phosphate + proteinSide 2.. In terms of biological role, part of the ABC transporter complex LktBD involved in leukotoxin export. Transmembrane domains (TMD) form a pore in the inner membrane and the ATP-binding domain (NBD) is responsible for energy generation. The protein is Leukotoxin translocation ATP-binding protein LktB (lktB) of Bibersteinia trehalosi (Pasteurella trehalosi).